We begin with the raw amino-acid sequence, 808 residues long: Phenylalanine--tRNA ligase beta subunit (808 aa).

Residues 40 to 149 (RPELDFVKIV…DQAEVGKTIR (110 aa)) enclose the tRNA-binding domain. In terms of domain architecture, B5 spans 407–484 (HKEVRIHTDI…RTKGYDTIQV (78 aa)). 4 residues coordinate Mg(2+): aspartate 462, aspartate 468, glutamate 471, and glutamate 472. An FDX-ACB domain is found at 716–808 (SQFPEAEIDL…LAGKNGFVLR (93 aa)).

It belongs to the phenylalanyl-tRNA synthetase beta subunit family. Type 1 subfamily. In terms of assembly, tetramer of two alpha and two beta subunits. It depends on Mg(2+) as a cofactor.

It localises to the cytoplasm. The catalysed reaction is tRNA(Phe) + L-phenylalanine + ATP = L-phenylalanyl-tRNA(Phe) + AMP + diphosphate + H(+). The polypeptide is Phenylalanine--tRNA ligase beta subunit (Leptospira interrogans serogroup Icterohaemorrhagiae serovar Lai (strain 56601)).